The primary structure comprises 602 residues: MWATSEGPLQYSLAPTQTDVNSSYNTVPPKLKEMKNQEVAVGQKLVLRCETTSEYPALRFKWLKNGKEITKKNRPENVKIPKKQKKYSELHIYRATLADAGEYACRVSSKLGNDSTKASVIITDTNATSTSTTGTSHLTKCDIKQKAFCVNGGECYMVKDLPNPPRYLCRCPNEFTGDRCQNYVMASFYKHLGIEFMEAEELYQKRVLTITGICIALLVVGIMCVVAYCKTKKQRKKLHDRLRQSLRSERNNVMNMANGPHHPNPPPDNVQLVNQYVSKNIISSERVVERETETSFSTSHYTSTTHHSMTVTQTPSHSWSNGHTESILSESHSVLVSSSVENSRHTSPTGPRGRLNGIGGPREGNSFLRHARETPDSYRDSPHSERYVSAMTTPARMSPVDFHTPTSPKSPPSEMSPPVSSLTISIPSVAVSPFMDEERPLLLVTPPRLREKYDNHLQQFNSFHNNPTHESNSLPPSPLRIVEDEEYETTQEYEPAQEPPKKLTNSRRVKRTKPNGHISSRVEVDSDTSSQSTSSESETEDERIGEDTPFLSIQNPMATSLEPAAAYRLAENRTNPANRFSTPEELQARLSSVIANQDPIAV.

At 1-206 the chain is on the extracellular side; sequence MWATSEGPLQ…MEAEELYQKR (206 aa). N21 carries an N-linked (GlcNAc...) asparagine glycan. The Ig-like C2-type domain occupies 29–123; the sequence is PKLKEMKNQE…DSTKASVIIT (95 aa). The cysteines at positions 49 and 105 are disulfide-linked. N-linked (GlcNAc...) asparagine glycosylation is found at N113 and N126. Positions 137 to 181 constitute an EGF-like domain; it reads HLTKCDIKQKAFCVNGGECYMVKDLPNPPRYLCRCPNEFTGDRCQ. Intrachain disulfides connect C141–C155, C149–C169, and C171–C180. The chain crosses the membrane as a helical span at residues 207 to 229; it reads VLTITGICIALLVVGIMCVVAYC. Residues 230 to 602 lie on the Cytoplasmic side of the membrane; the sequence is KTKKQRKKLH…VIANQDPIAV (373 aa). Disordered regions lie at residues 293 to 366, 391 to 421, 460 to 479, and 486 to 553; these read ETSF…EGNS, MTTP…PVSS, FNSF…PSPL, and EYET…FLSI. A compositionally biased stretch (low complexity) spans 294–314; the sequence is TSFSTSHYTSTTHHSMTVTQT. The segment covering 315–324 has biased composition (polar residues); the sequence is PSHSWSNGHT. Positions 325 to 341 are enriched in low complexity; that stretch reads ESILSESHSVLVSSSVE. The segment covering 460 to 474 has biased composition (polar residues); that stretch reads FNSFHNNPTHESNSL. Positions 504 to 514 are enriched in basic residues; that stretch reads TNSRRVKRTKP. The span at 527 to 536 shows a compositional bias: low complexity; that stretch reads DTSSQSTSSE.

The protein belongs to the neuregulin family. Post-translationally, proteolytic cleavage close to the plasma membrane on the external face leads to the release of the soluble growth factor form. In terms of processing, extensive glycosylation precedes the proteolytic cleavage.

Its subcellular location is the cell membrane. It is found in the secreted. Its function is as follows. Direct ligand for the ERBB tyrosine kinase receptors. The multiple isoforms perform diverse functions: cysteine-rich domain containing isoforms (isoform 2-isoform 4) probably regulate the expression of nicotinic acetylcholine receptors at developing interneuronal synapses. Isoform Ig-NRG is required for the initial induction and/or maintenance of the mature levels of acetylcholine receptors at neuromuscular synapses. Binds to ERBB3 and integrins to form a complex which is essential for NRG1-ERBB signaling. In Gallus gallus (Chicken), this protein is Pro-neuregulin-1, membrane-bound isoform (NRG1).